Consider the following 535-residue polypeptide: Succinate-semialdehyde dehydrogenase, mitochondrial (535 aa).

A mitochondrion-targeting transit peptide spans 1–47 (MATCIWLRSCGARRLGWTFPGCRLRPRAGGLVPASGPAPGPAQLRCY). Residue Lys126 is modified to N6-acetyllysine; alternate. The residue at position 126 (Lys126) is an N6-succinyllysine; alternate. 2 positions are modified to N6-succinyllysine: Lys135 and Lys184. Residues Arg213 and 228 to 231 (KPAE) each bind NAD(+). Arg213 is a binding site for substrate. An N6-acetyllysine; alternate modification is found at Lys265. Position 265 is an N6-succinyllysine; alternate (Lys265). 284–289 (GSTTTG) contacts NAD(+). Glu306 (proton acceptor) is an active-site residue. Arg334 provides a ligand contact to substrate. The active-site Nucleophile is Cys340. Cys340 and Cys342 form a disulfide bridge. Lys365 is modified (N6-acetyllysine). Lys402 bears the N6-succinyllysine mark. Lys411 carries the post-translational modification N6-acetyllysine. Ser498 serves as a coordination point for substrate. Ser499 is subject to Phosphoserine.

This sequence belongs to the aldehyde dehydrogenase family. In terms of assembly, homotetramer.

It is found in the mitochondrion. The enzyme catalyses succinate semialdehyde + NAD(+) + H2O = succinate + NADH + 2 H(+). It participates in amino-acid degradation; 4-aminobutanoate degradation. Its activity is regulated as follows. Redox-regulated. Inhibited under oxydizing conditions. In terms of biological role, catalyzes one step in the degradation of the inhibitory neurotransmitter gamma-aminobutyric acid (GABA). This chain is Succinate-semialdehyde dehydrogenase, mitochondrial (ALDH5A1), found in Pan paniscus (Pygmy chimpanzee).